The primary structure comprises 310 residues: tRNA-cytidine(32) 2-sulfurtransferase (310 aa).

Positions 47-52 (SGGKDS) match the PP-loop motif motif. C122, C125, and C213 together coordinate [4Fe-4S] cluster.

Belongs to the TtcA family. Homodimer. Requires Mg(2+) as cofactor. It depends on [4Fe-4S] cluster as a cofactor.

Its subcellular location is the cytoplasm. The enzyme catalyses cytidine(32) in tRNA + S-sulfanyl-L-cysteinyl-[cysteine desulfurase] + AH2 + ATP = 2-thiocytidine(32) in tRNA + L-cysteinyl-[cysteine desulfurase] + A + AMP + diphosphate + H(+). It functions in the pathway tRNA modification. Functionally, catalyzes the ATP-dependent 2-thiolation of cytidine in position 32 of tRNA, to form 2-thiocytidine (s(2)C32). The sulfur atoms are provided by the cysteine/cysteine desulfurase (IscS) system. This Haemophilus influenzae (strain PittEE) protein is tRNA-cytidine(32) 2-sulfurtransferase.